A 1055-amino-acid polypeptide reads, in one-letter code: Ubiquitin carboxyl-terminal hydrolase 25 (1055 aa).

In terms of domain architecture, UBA-like spans Gln14 to Lys57. An SUMO interaction domain (SIM) region spans residues Asn77–Leu102. Ser85 is subject to Phosphoserine. Positions Thr89–Thr95 match the Required for SUMO paralog-specific binding motif. UIM domains lie at Asp97–Ala116 and Thr123–Asn140. A Glycyl lysine isopeptide (Lys-Gly) (interchain with G-Cter in SUMO); alternate cross-link involves residue Lys99. A Glycyl lysine isopeptide (Lys-Gly) (interchain with G-Cter in ubiquitin); alternate cross-link involves residue Lys99. The 489-residue stretch at Val169 to Asp657 folds into the USP domain. Cys178 is a catalytic residue. Positions Val464–Ser507 are disordered. Polar residues predominate over residues Ser476–Ala496. The segment covering Leu497–Ser507 has biased composition (low complexity). The stretch at Thr541–Glu578 forms a coiled coil. Active-site residues include His599 and His607. Residues Asp684 to Leu717 adopt a coiled-coil conformation. Residues Thr727–Phe749 are disordered. Tyr740 carries the phosphotyrosine modification.

It belongs to the peptidase C19 family. Homotetramer, inhibited form. Homodimer, active form. Interacts with ACTA1 (via its C-terminus); the interaction occurs for all isoforms but is strongest for isoform USP25m in muscle differentiating cells. Interacts (isoform USP25m only) with MYBPC1; the interaction prevents proteasomal degradation of MYBPC1. Interacts (isoform USP25m only) with FLNC (via filament repeats 17-18, 20-21 and 24). Interacts with GAPDH. Interacts with SUMO3; the interaction sumoylates efficiently USP25. Interacts with SUMO2; the interaction sumoylates efficiently USP25. Interacts with SUMO1; the interaction only weakly sumoylates USP25. Interacts with SYK; phosphorylates USP25 and regulates USP25 intracellular levels. Post-translationally, acetylated. In terms of processing, sumoylation impairs binding to and hydrolysis of ubiquitin chains. Sumoylated preferentially with SUMO2 or SUMO3. Desumoylated by SENP1. Polyubiquitinated by SMURF1 by promoting the 'Lys-48'-linkage leading to proteasomal degradation. Preferentially monoubiquitinated but can also be polyubiquitinated. Autodeubiquitinated. Ubiquitination activates the enzymatic activity either by preventing sumoylation or by allowing novel interactions. Post-translationally, phosphorylation in the C-terminal by SYK regulates USP25 cellular levels. Isoform USP25a is found in most adult and fetal tissues; expression is moderately high in testis, pancreas, kidney, skeletal muscle, liver, lung, placenta, heart, but very low in peripheral blood, colon, small intestine, ovary, prostate, thymus and spleen. Expressed in the brain, with high levels in the cerebral cortex. Isoform USP25b is found in all tissues except heart and skeletal muscle. Isoform USP25m is heart and skeletal muscle specific.

It localises to the cytoplasm. The protein resides in the nucleus. It catalyses the reaction Thiol-dependent hydrolysis of ester, thioester, amide, peptide and isopeptide bonds formed by the C-terminal Gly of ubiquitin (a 76-residue protein attached to proteins as an intracellular targeting signal).. In terms of biological role, deubiquitinating enzyme that hydrolyzes ubiquitin moieties conjugated to substrates and thus, functions in various biological processes including inflammation and immune response. Modulates the Wnt/beta-catenin pathway by deubiquitinating and stabilizing tankyrases TNKS1 and TNKS2. Regulates KEAP1-NRF2 axis in the defense against oxidative assaults by deubiquitinating KEAP1 and protecting it from degradation leading to degradation of the NRF2 transcription factor that is responsible for mounting an anti-oxidation gene expression program. Positively regulates RNA virus-induced innate signaling by interacting with and deubiquitinating ERLIN1 and ERLIN2. In turn, restricts virus production by regulating cholesterol biosynthetic flux. Acts as a negative regulator of interleukin-17-mediated signaling and inflammation through the removal of 'Lys-63'-linked ubiquitination of TRAF5 and TRAF6. Prevents the ubiquitination and degradation of TRAF3 to reduce the phosphorylation levels of JNK and P38, the secretion of IL-1B and to induce endotoxin tolerance. Its function is as follows. The muscle-specific isoform (USP25m) may have a role in the regulation of muscular differentiation and function. In Homo sapiens (Human), this protein is Ubiquitin carboxyl-terminal hydrolase 25 (USP25).